We begin with the raw amino-acid sequence, 377 residues long: Endoplasmic reticulum-Golgi intermediate compartment protein 2 (377 aa).

Topologically, residues 1 to 33 (MRRLNRKKTLSLVKELDAFPKVPESYVETSASG) are cytoplasmic. A helical membrane pass occupies residues 34-54 (GTVSLIAFTTMALLTIMEFSV). At 55 to 319 (YQDTWMKYEY…PFWQFFVRLC (265 aa)) the chain is on the lumenal side. The chain crosses the membrane as a helical span at residues 320 to 340 (GIVGGIFSTTGMLHGIGKFIV). At 341–377 (EIICCRFRLGSYKPVNSVPFEDGHTDNHLPLLENNTH) the chain is on the cytoplasmic side.

It belongs to the ERGIC family. As to quaternary structure, may form a heteromeric complex composed of ERGIC1, ERGIC2 and ERGIC3. Interacts with ERGIC3, the interaction is required for the stable expression of both proteins. May interact with EEF1A1.

Its subcellular location is the endoplasmic reticulum-Golgi intermediate compartment membrane. The protein resides in the golgi apparatus. The protein localises to the cis-Golgi network membrane. It is found in the endoplasmic reticulum membrane. It localises to the cytoplasm. Its subcellular location is the nucleus. Its function is as follows. Possible role in transport between endoplasmic reticulum and Golgi. This chain is Endoplasmic reticulum-Golgi intermediate compartment protein 2 (ERGIC2), found in Macaca fascicularis (Crab-eating macaque).